The chain runs to 280 residues: Energy-coupling factor transporter ATP-binding protein EcfA2 (280 aa).

One can recognise an ABC transporter domain in the interval 3-245 (ISLENVSYTY…VAFLKEKQLG (243 aa)). Residue 40-47 (GHTGSGKS) coordinates ATP.

It belongs to the ABC transporter superfamily. Energy-coupling factor EcfA family. Forms a stable energy-coupling factor (ECF) transporter complex composed of 2 membrane-embedded substrate-binding proteins (S component), 2 ATP-binding proteins (A component) and 2 transmembrane proteins (T component).

It is found in the cell membrane. Functionally, ATP-binding (A) component of a common energy-coupling factor (ECF) ABC-transporter complex. Unlike classic ABC transporters this ECF transporter provides the energy necessary to transport a number of different substrates. In Streptococcus thermophilus (strain CNRZ 1066), this protein is Energy-coupling factor transporter ATP-binding protein EcfA2.